We begin with the raw amino-acid sequence, 141 residues long: NADH dehydrogenase [ubiquinone] 1 alpha subcomplex subunit 11 (141 aa).

Alanine 2 is subject to N-acetylalanine. The next 2 helical transmembrane spans lie at 21–43 and 58–80; these read KAYI…SITH and RFTF…SAQV.

It belongs to the complex I NDUFA11 subunit family. In terms of assembly, complex I is composed of 45 different subunits.

The protein localises to the mitochondrion inner membrane. Its function is as follows. Accessory subunit of the mitochondrial membrane respiratory chain NADH dehydrogenase (Complex I), that is believed not to be involved in catalysis. Complex I functions in the transfer of electrons from NADH to the respiratory chain. The immediate electron acceptor for the enzyme is believed to be ubiquinone. This chain is NADH dehydrogenase [ubiquinone] 1 alpha subcomplex subunit 11 (Ndufa11), found in Rattus norvegicus (Rat).